Here is a 425-residue protein sequence, read N- to C-terminus: uncharacterized protein (425 aa).

This is an uncharacterized protein from Acidianus sp. F28 (AFV-2).